The primary structure comprises 267 residues: MPRAFLVKKPCVSTCKRNWSELPDEERGEIYVPVSLGFCPPQPYQEPEPSVAEPPSCPLALDMSLRNSSYSVTPGPCVVAQLPSEDMSRLAGPQSRDHGFLRTKMKVTLGDGPSGDLFTCHICQKAFTYQRMLNRHMKCHNDVKRHLCTYCGKGFNDTFDLKRHVRTHTGVRPYKCSLCDKAFTQRCSLESHLKKIHGVQQKYAYKERRAKLYVCEECGCTSESQEGHVLHLKEHHPDSPLLRKTSKKVAVALQNTVTSLLQGAHHV.

C2H2-type zinc fingers lie at residues 118-140 (FTCH…MKCH), 146-168 (HLCT…VRTH), 174-197 (YKCS…KKIH), and 213-235 (YVCE…LKEH).

It is found in the nucleus. Putative transcription factor. Involved in hair formation and spermatogenesis. May function in the differentiation and/or maintenance of the urogenital system. This Bos taurus (Bovine) protein is Putative transcription factor Ovo-like 1 (OVOL1).